A 550-amino-acid chain; its full sequence is Chaperonin GroEL 2 (550 aa).

ATP-binding positions include 30–33 (TLGP), lysine 51, 87–91 (DGTTT), glycine 415, and aspartate 496.

It belongs to the chaperonin (HSP60) family. As to quaternary structure, forms a cylinder of 14 subunits composed of two heptameric rings stacked back-to-back. Interacts with the co-chaperonin GroES.

It localises to the cytoplasm. The catalysed reaction is ATP + H2O + a folded polypeptide = ADP + phosphate + an unfolded polypeptide.. Together with its co-chaperonin GroES, plays an essential role in assisting protein folding. The GroEL-GroES system forms a nano-cage that allows encapsulation of the non-native substrate proteins and provides a physical environment optimized to promote and accelerate protein folding. The polypeptide is Chaperonin GroEL 2 (Bradyrhizobium diazoefficiens (strain JCM 10833 / BCRC 13528 / IAM 13628 / NBRC 14792 / USDA 110)).